Here is a 1040-residue protein sequence, read N- to C-terminus: Multidrug resistance protein MdtB (1040 aa).

The next 12 helical transmembrane spans lie at 25–45 (LLMA…PVAA), 347–367 (LMLA…NIPA), 369–389 (IIPG…MVFL), 396–416 (LTLM…IVVI), 440–460 (IGFT…PLLF), 472–492 (FAVT…TLTP), 537–557 (WLTL…WIVI), 863–883 (LGST…VLGV), 888–908 (FIHP…ALLA), 910–930 (IIAG…LIGI), 968–988 (ILMT…STGV), and 998–1018 (IAMV…TPVI).

The protein belongs to the resistance-nodulation-cell division (RND) (TC 2.A.6) family. MdtB subfamily. Part of a tripartite efflux system composed of MdtA, MdtB and MdtC. MdtB forms a heteromultimer with MdtC.

Its subcellular location is the cell inner membrane. This Salmonella newport (strain SL254) protein is Multidrug resistance protein MdtB.